A 433-amino-acid polypeptide reads, in one-letter code: uncharacterized protein (433 aa).

The helical transmembrane segment at 36-58 (YYYYVQLAFKMLVGVLKNLPVVY) threads the bilayer. The segment at 169–433 (VRVPSRDLQP…GEGRDLPEDN (265 aa)) is disordered. 2 stretches are compositionally biased toward acidic residues: residues 216-227 (GEPGENGDESDE) and 234-254 (GDED…YESD). Composition is skewed to basic and acidic residues over residues 265-280 (EPDR…RGSE), 354-364 (GGRRPARRDSP), and 422-433 (RRGEGRDLPEDN).

The protein localises to the host membrane. This is an uncharacterized protein from Psittacid herpesvirus 1 (isolate Amazon parrot/-/97-0001/1997) (PsHV-1).